The following is a 193-amino-acid chain: Ion-translocating oxidoreductase complex subunit A (193 aa).

6 helical membrane passes run 5–25 (LLLF…FLGL), 39–59 (MGMG…AWLI), 63–83 (ILIP…VIAV), 102–122 (LLGI…VALL), 134–154 (ALYG…FAAI), and 171–191 (AIAL…SGLV).

It belongs to the NqrDE/RnfAE family. As to quaternary structure, the complex is composed of six subunits: RsxA, RsxB, RsxC, RsxD, RsxE and RsxG.

The protein localises to the cell inner membrane. Part of a membrane-bound complex that couples electron transfer with translocation of ions across the membrane. Required to maintain the reduced state of SoxR. The polypeptide is Ion-translocating oxidoreductase complex subunit A (Shigella boydii serotype 18 (strain CDC 3083-94 / BS512)).